The following is a 459-amino-acid chain: MNFKAIILAAGKGTRMKSKYPKVIHKVCGKEMVNHIIDVSKKSGVKDTVVILGHEADVVKEKLAEEIIIAMQTEQLGTGHAVKMAKEYINDEDTIVVLCGDTPLIKEETLKRLFEYHIENKYHATVLTTRVGNPTGYGRIIRDKKGDLLKIVEQKDANSEEKMISEINSGIYCFNGKSLREALDLLNNNNSQGEYYLTDTAKIMRDKGLKVGAFAGSTIEELMGVNSRVELSKAEEIMRRRINESHMVNGVTIIDTNSTYIESDVMIGNDTIIYPGVMLQGKTRIGSDCIIGMNSSITNSEIGDGTEIKNSTIIDSKVGENSTVGPYAYLRPKSDLGNNVKIGDFVEVKNAIIEDGSKASHLSYIGDAHVGKNVNIGCGVVFVNYDGKNKFKSIVKDNAFIGSNSNLVAPVVVEEKGYIATGSTITHDVPDGALAIARERQVIKEGWVEKKNQKDDQSK.

The tract at residues 1–228 (MNFKAIILAA…IEELMGVNSR (228 aa)) is pyrophosphorylase. Residues 8 to 11 (LAAG), Lys-22, Gln-72, and 77 to 78 (GT) each bind UDP-N-acetyl-alpha-D-glucosamine. Residue Asp-101 participates in Mg(2+) binding. UDP-N-acetyl-alpha-D-glucosamine-binding residues include Gly-138, Glu-153, Asn-168, and Asn-226. Asn-226 contributes to the Mg(2+) binding site. Residues 229-249 (VELSKAEEIMRRRINESHMVN) are linker. The N-acetyltransferase stretch occupies residues 250-459 (GVTIIDTNST…KKNQKDDQSK (210 aa)). UDP-N-acetyl-alpha-D-glucosamine contacts are provided by Arg-331 and Lys-349. His-361 (proton acceptor) is an active-site residue. UDP-N-acetyl-alpha-D-glucosamine contacts are provided by Tyr-364 and Asn-375. Acetyl-CoA is bound by residues 384–385 (NY), Ser-403, Thr-421, and Arg-438.

It in the N-terminal section; belongs to the N-acetylglucosamine-1-phosphate uridyltransferase family. In the C-terminal section; belongs to the transferase hexapeptide repeat family. In terms of assembly, homotrimer. It depends on Mg(2+) as a cofactor.

The protein resides in the cytoplasm. The enzyme catalyses alpha-D-glucosamine 1-phosphate + acetyl-CoA = N-acetyl-alpha-D-glucosamine 1-phosphate + CoA + H(+). It catalyses the reaction N-acetyl-alpha-D-glucosamine 1-phosphate + UTP + H(+) = UDP-N-acetyl-alpha-D-glucosamine + diphosphate. The protein operates within nucleotide-sugar biosynthesis; UDP-N-acetyl-alpha-D-glucosamine biosynthesis; N-acetyl-alpha-D-glucosamine 1-phosphate from alpha-D-glucosamine 6-phosphate (route II): step 2/2. It functions in the pathway nucleotide-sugar biosynthesis; UDP-N-acetyl-alpha-D-glucosamine biosynthesis; UDP-N-acetyl-alpha-D-glucosamine from N-acetyl-alpha-D-glucosamine 1-phosphate: step 1/1. It participates in bacterial outer membrane biogenesis; LPS lipid A biosynthesis. Functionally, catalyzes the last two sequential reactions in the de novo biosynthetic pathway for UDP-N-acetylglucosamine (UDP-GlcNAc). The C-terminal domain catalyzes the transfer of acetyl group from acetyl coenzyme A to glucosamine-1-phosphate (GlcN-1-P) to produce N-acetylglucosamine-1-phosphate (GlcNAc-1-P), which is converted into UDP-GlcNAc by the transfer of uridine 5-monophosphate (from uridine 5-triphosphate), a reaction catalyzed by the N-terminal domain. This chain is Bifunctional protein GlmU, found in Clostridioides difficile (strain 630) (Peptoclostridium difficile).